A 31-amino-acid polypeptide reads, in one-letter code: PTEN upstream open reading frame MP31 (31 aa).

Interacts with lactate dehydrogenases LDHA and LDHB; interaction with mitochondrial LDH leads to inhibition of lactate dehydrogenase activity, preventing conversion of lactate to pyruvate. As to expression, expressed in brain (at protein level). Expressed at lower levels in glioblastomas than in normal brain tissue (at protein level).

The protein resides in the mitochondrion. Its function is as follows. Inhibits lactate dehydrogenase (LDH)-mediated conversion of lactate to pyruvate in mitochondria by competing with mitochondrial LDH for binding to NAD(+). Also inhibits cellular lactate utilization. The protein is PTEN upstream open reading frame MP31 of Homo sapiens (Human).